The sequence spans 324 residues: Pancreas transcription factor 1 subunit alpha (324 aa).

Residues 160-212 (QLRQAANVRERRRMQSINDAFEGLRSHIPTLPYEKRLSKVDTLRLAIGYINFL) form the bHLH domain. Positions 302-324 (DPRKLNSKSFDNIENEPPFEFVS) are disordered.

Component of the pancreas transcription factor 1 complex (PTF1) which is composed of TCF3/p75, TCF12/p64 and PTF1A/p48. TCF3 is responsible for the nuclear import of the p48/p64 complex. Interacts with TCF3 and RBPSUH/RBP-Jkappa. As to expression, expressed in precursors of pancreatic islets, acini and ducts.

It localises to the nucleus. It is found in the cytoplasm. Functionally, transcription factor implicated in the cell fate determination in various organs. Binds to the E-box consensus sequence 5'-CANNTG-3'. Plays a role in early and late pancreas development and differentiation. Important for determining whether cells allocated to the pancreatic buds continue towards pancreatic organogenesis or revert back to duodenal fates. May be involved in the maintenance of exocrine pancreas-specific gene expression including ELA1 and amylase. Required for the formation of pancreatic acinar and ductal cells. Plays an important role in cerebellar development. Directly regulated by FOXN4 and RORC during retinal development, FOXN4-PTF1A pathway plays a central role in directing the differentiation of retinal progenitors towards horizontal and amacrine fates. The sequence is that of Pancreas transcription factor 1 subunit alpha (Ptf1a) from Mus musculus (Mouse).